Here is a 626-residue protein sequence, read N- to C-terminus: Chaperone protein HtpG (626 aa).

Residues 1-339 (MSQNQETRGF…SNDLPLNVSR (339 aa)) form an a; substrate-binding region. A b region spans residues 340 to 555 (EILQDNKITA…NDQMTTQMAK (216 aa)). A c region spans residues 556–626 (LFAAAGQPVP…FIKRINKLLG (71 aa)).

The protein belongs to the heat shock protein 90 family. Homodimer.

The protein localises to the cytoplasm. Its function is as follows. Molecular chaperone. Has ATPase activity. The chain is Chaperone protein HtpG from Haemophilus influenzae (strain PittEE).